The chain runs to 225 residues: KDP operon transcriptional regulatory protein KdpE (225 aa).

The region spanning 3-116 is the Response regulatory domain; the sequence is NVLIVEDEQA…ELQARLRVAL (114 aa). Asp-52 carries the 4-aspartylphosphate modification. The ompR/PhoB-type DNA-binding region spans 126–225; the sequence is DPLVKFSDVT…ETGIGYRFML (100 aa).

Phosphorylated by KdpD.

The protein resides in the cytoplasm. In terms of biological role, member of the two-component regulatory system KdpD/KdpE involved in the regulation of the kdp operon. The protein is KDP operon transcriptional regulatory protein KdpE (kdpE) of Escherichia coli (strain K12).